The chain runs to 424 residues: Glutamate-1-semialdehyde 2,1-aminomutase (424 aa).

N6-(pyridoxal phosphate)lysine is present on Lys263.

The protein belongs to the class-III pyridoxal-phosphate-dependent aminotransferase family. HemL subfamily. In terms of assembly, homodimer. It depends on pyridoxal 5'-phosphate as a cofactor.

It is found in the cytoplasm. The catalysed reaction is (S)-4-amino-5-oxopentanoate = 5-aminolevulinate. The protein operates within porphyrin-containing compound metabolism; protoporphyrin-IX biosynthesis; 5-aminolevulinate from L-glutamyl-tRNA(Glu): step 2/2. In Campylobacter jejuni subsp. jejuni serotype O:2 (strain ATCC 700819 / NCTC 11168), this protein is Glutamate-1-semialdehyde 2,1-aminomutase.